Consider the following 114-residue polypeptide: Protein yippee-like (114 aa).

The region spanning 14–111 is the Yippee domain; the sequence is RTYSCVHCRA…IELAHMIKEN (98 aa). Cys18, Cys21, Cys74, and Cys77 together coordinate Zn(2+).

Belongs to the yippee family.

Its function is as follows. Involved in regulating synaptic transmission in presynaptic neurons. In class IV dendritic arborization neurons (nociceptors), involved in regulating activation of their second-order neurons (SONs) and maintaining synaptic contact between nociceptors and their SONs. The protein is Protein yippee-like of Drosophila melanogaster (Fruit fly).